We begin with the raw amino-acid sequence, 441 residues long: Probable xylan O-acetyltransferase 10 (441 aa).

At 1–19 (MMKPQHGGMAGHGGGRTRS) the chain is on the cytoplasmic side. Residues 20–40 (PFLTSYALTLAFITFVSVLYF) form a helical; Signal-anchor for type II membrane protein membrane-spanning segment. The Lumenal portion of the chain corresponds to 41–441 (KDFSSTLHQP…ELLYSKLFFP (401 aa)). The segment at 50-81 (PFLTRPPPHRRQIARPRAPSHHHGGGSSSGGG) is disordered. Residues 56 to 73 (PPHRRQIARPRAPSHHHG) are compositionally biased toward basic residues. 4 disulfide bridges follow: Cys-97–Cys-148, Cys-119–Cys-184, Cys-128–Cys-422, and Cys-341–Cys-418. The N-linked (GlcNAc...) asparagine glycan is linked to Asn-154. A GDS motif motif is present at residues 171–173 (GDS). The active-site Nucleophile is Ser-173. N-linked (GlcNAc...) asparagine glycans are attached at residues Asn-212, Asn-343, and Asn-381. The Proton donor role is filled by Asp-417. The DXXH motif motif lies at 417 to 420 (DCTH). Residue His-420 is the Proton acceptor of the active site.

Belongs to the PC-esterase family. TBL subfamily. Expressed in roots, leaves and stems.

The protein resides in the golgi apparatus membrane. Its function is as follows. Probable xylan acetyltransferase required for 2-O- and 3-O-monoacetylation of xylosyl residues in xylan. Possesses extremely low activity in vitro. The polypeptide is Probable xylan O-acetyltransferase 10 (Oryza sativa subsp. japonica (Rice)).